We begin with the raw amino-acid sequence, 226 residues long: Ribonuclease 3 (226 aa).

Positions 6 to 128 (INRLQRKLGY…LIGGVFLDSD (123 aa)) constitute an RNase III domain. Glutamate 41 is a Mg(2+) binding site. Residue aspartate 45 is part of the active site. The Mg(2+) site is built by aspartate 114 and glutamate 117. Residue glutamate 117 is part of the active site. In terms of domain architecture, DRBM spans 155 to 225 (DPKTRLQEYL…AEQALKQLEL (71 aa)).

It belongs to the ribonuclease III family. In terms of assembly, homodimer. The cofactor is Mg(2+).

The protein resides in the cytoplasm. It carries out the reaction Endonucleolytic cleavage to 5'-phosphomonoester.. Functionally, digests double-stranded RNA. Involved in the processing of primary rRNA transcript to yield the immediate precursors to the large and small rRNAs (23S and 16S). Processes some mRNAs, and tRNAs when they are encoded in the rRNA operon. Processes pre-crRNA and tracrRNA of type II CRISPR loci if present in the organism. This is Ribonuclease 3 from Yersinia pseudotuberculosis serotype O:1b (strain IP 31758).